A 449-amino-acid polypeptide reads, in one-letter code: Probable glucuronosyltransferase 47 A (449 aa).

At 1–31 the chain is on the cytoplasmic side; sequence MEHPLECADSCSLAMSWFCNKKCRGWGLMKR. The helical; Signal-anchor for type II membrane protein transmembrane segment at 32 to 52 threads the bilayer; sequence TVVASGLRSVVLLLLFIYFVQ. The Lumenal segment spans residues 53–449; sequence DVTAEMGHQR…GDLYPWGNDL (397 aa). 2 N-linked (GlcNAc...) asparagine glycosylation sites follow: Asn-172 and Asn-433.

It belongs to the glycosyltransferase 47 family. As to expression, mostly expressed in newly formed or expanding tissues.

It localises to the golgi apparatus membrane. In terms of biological role, involved in the synthesis of glucuronoxylan hemicellulose in secondary cell walls. The chain is Probable glucuronosyltransferase 47 A from Physcomitrium patens (Spreading-leaved earth moss).